The primary structure comprises 409 residues: Na(+)-translocating NADH-quinone reductase subunit F (409 aa).

A helical transmembrane segment spans residues 5–25 (FIFGIGAFTAIVLVLAVVILI). One can recognise a 2Fe-2S ferredoxin-type domain in the interval 34 to 128 (GDITISINDD…SMDVELPEEV (95 aa)). Residues Cys71, Cys77, Cys80, and Cys112 each contribute to the [2Fe-2S] cluster site. In terms of domain architecture, FAD-binding FR-type spans 131-271 (VKKWECTVIS…SGPFGEFFAK (141 aa)).

It belongs to the NqrF family. Composed of six subunits; NqrA, NqrB, NqrC, NqrD, NqrE and NqrF. Requires [2Fe-2S] cluster as cofactor. It depends on FAD as a cofactor.

It is found in the cell inner membrane. It carries out the reaction a ubiquinone + n Na(+)(in) + NADH + H(+) = a ubiquinol + n Na(+)(out) + NAD(+). NQR complex catalyzes the reduction of ubiquinone-1 to ubiquinol by two successive reactions, coupled with the transport of Na(+) ions from the cytoplasm to the periplasm. The first step is catalyzed by NqrF, which accepts electrons from NADH and reduces ubiquinone-1 to ubisemiquinone by a one-electron transfer pathway. The polypeptide is Na(+)-translocating NADH-quinone reductase subunit F (Actinobacillus succinogenes (strain ATCC 55618 / DSM 22257 / CCUG 43843 / 130Z)).